Here is a 481-residue protein sequence, read N- to C-terminus: Protein hedgehog (481 aa).

The N-palmitoyl cysteine moiety is linked to residue C93. Residues E157, E158, D163, T193, E194, D197, and D199 each coordinate Ca(2+). G265 is lipidated: Cholesterol glycine ester.

The protein belongs to the hedgehog family. Interacts with shf. In terms of processing, the C-terminal part of the hedgehog protein precursor displays an autoproteolysis activity that results in the cleavage of the full-length protein into two parts (N-product and C-product). In addition, the C-terminal part displays a cholesterol transferase activity that results by the covalent attachment of a cholesterol moiety to the C-terminal of the newly generated N-product. The N-product is the active species in both local and long-range signaling, whereas the C-product has no signaling activity. Cholesterylation is required for N-product targeting to lipid rafts and multimerization. Post-translationally, N-palmitoylation by Rasp of the hedgehog N-product, within the secretory pathway, is required for the embryonic and larval patterning activities of the hedgehog signal.

Its subcellular location is the nucleus. The protein localises to the cytoplasm. The protein resides in the cell membrane. It catalyses the reaction glycyl-L-cysteinyl-[protein] + cholesterol + H(+) = [protein]-C-terminal glycyl cholesterol ester + N-terminal L-cysteinyl-[protein]. The C-terminal part of the hedgehog protein precursor displays an autoproteolysis activity that results in the cleavage of the full-length protein into two parts (N-product and C-product). In addition, the C-terminal part displays a cholesterol transferase activity that results by the covalent attachment of a cholesterol moiety to the C-terminal of the newly generated N-product. Once cleaved, the C-product has no signaling activity and diffuses from the cell. Functionally, the dually lipidated hedgehog protein N-product is a morphogen which is essential for a variety of patterning events during development. Establishes the anterior-posterior axis of the embryonic segments and patterns the larval imaginal disks. Binds to the patched (ptc) receptor, which functions in association with smoothened (smo), to activate the transcription of target genes wingless (wg), decapentaplegic (dpp) and ptc. In the absence of hh, ptc represses the constitutive signaling activity of smo through fused (fu). Essential component of a signaling pathway which regulates the Duox-dependent gut immune response to bacterial uracil; required to activate Cad99C-dependent endosome formation, norpA-dependent Ca2+ mobilization and p38 MAPK, which are essential steps in the Duox-dependent production of reactive oxygen species (ROS) in response to intestinal bacterial infection. During photoreceptor differentiation, it up-regulates transcription of Ubr3, which in turn promotes the hh-signaling pathway by mediating the ubiquitination and degradation of cos. The protein is Protein hedgehog (hh-1) of Drosophila pseudoobscura pseudoobscura (Fruit fly).